Reading from the N-terminus, the 643-residue chain is MERNTLSCFISDHEGFNGTIKNSPQDFVVIEIDTNGQFVNSVNTEEEERPCQTTKRIGKLKPSKPDDTDSLIQDCFDLNLILGLSVNRELEHFTNKLKVKPCSDDQEKVELSLGTFPDKHMRAVVHKAVRFNFPFLQTLTNQSEIRVREDPDFQELAGLASEGEAEDFFRFIDAKTPGSVFTFLPDDSKEHRTSVHHFVSRRFGKLVETKSFVDQQKTCITVRLRERGKQAKKRTMADCQMQEESLYTAFTLRKENLETLEAISYMAAVLGVLPSDFTYAGIKDKRAITYQAMVVKKISPERLLEKGSEFERRGMEISRVRPAFEALKLGRLQGNHFELVIRDLKHHGKHGLAELPKVIEEAVENVKNKGFVNYYGPQRFGSGSCVQADQVGLALLKENMEASVKLFFTPEDDDDLQNKAKRHFLHTGNAKESLVLMPAYKARERLMLRALHRYGSGQEGCTRGWLSLPHSMRVFYLHSYCSRVWNQAAKYRLQKLGFKPVQGDLVWAEPVKGLKDATEELSAPQIHVVTSDEEKNEVFSLDQVILPMPGNSVKYPENLLGQWYQDRLAQDGLESCRFRVTPLKLNVPGCYRPLLAKPQNITYSLQTSSSDESNTHCLSLNFDLEASCYATVCLGEIMKTNLS.

The Nucleophile role is filled by aspartate 284. A TRUD domain is found at 370-597 (GFVNYYGPQR…PGCYRPLLAK (228 aa)).

Belongs to the pseudouridine synthase TruD family.

It carries out the reaction a uridine in mRNA = a pseudouridine in mRNA. Its function is as follows. Pseudouridine synthase that catalyzes pseudouridylation of mRNAs. The protein is Pseudouridylate synthase PUS7L (pus7l) of Danio rerio (Zebrafish).